Reading from the N-terminus, the 974-residue chain is Translation initiation factor IF-2 (974 aa).

Residues Phe-31–Pro-376 form a disordered region. The segment covering Pro-52–Gly-68 has biased composition (low complexity). The segment covering Gly-83–Ala-96 has biased composition (pro residues). Residues Ala-97 to Lys-133 are compositionally biased toward low complexity. Positions Pro-134 to Pro-147 are enriched in pro residues. 2 stretches are compositionally biased toward low complexity: residues Ala-148–Ala-166 and Arg-179–Glu-191. Pro residues-rich tracts occupy residues Pro-195 to Ala-210 and Arg-253 to Gly-266. Over residues Ala-267 to Pro-277 the composition is skewed to low complexity. Gly residues predominate over residues Gly-279–Gly-332. Over residues Arg-349–Lys-358 the composition is skewed to basic residues. One can recognise a tr-type G domain in the interval Ser-470–Leu-641. Residues Gly-479–Thr-486 are G1. Gly-479–Thr-486 lines the GTP pocket. Residues Gly-504–His-508 form a G2 region. Residues Asp-529 to Gly-532 are G3. Residues Asp-529–His-533 and Asn-583–Asp-586 each bind GTP. Positions Asn-583–Asp-586 are G4. The segment at Ser-619–Lys-621 is G5.

It belongs to the TRAFAC class translation factor GTPase superfamily. Classic translation factor GTPase family. IF-2 subfamily.

The protein localises to the cytoplasm. Its function is as follows. One of the essential components for the initiation of protein synthesis. Protects formylmethionyl-tRNA from spontaneous hydrolysis and promotes its binding to the 30S ribosomal subunits. Also involved in the hydrolysis of GTP during the formation of the 70S ribosomal complex. The protein is Translation initiation factor IF-2 of Rhodococcus opacus (strain B4).